The following is a 692-amino-acid chain: Elongation factor G (692 aa).

Positions 8 to 282 constitute a tr-type G domain; the sequence is ENTRNIGIMA…AVIDYLPSPL (275 aa). GTP is bound by residues 17 to 24, 81 to 85, and 135 to 138; these read AHIDAGKT, DTPGH, and NKMD.

This sequence belongs to the TRAFAC class translation factor GTPase superfamily. Classic translation factor GTPase family. EF-G/EF-2 subfamily.

It localises to the cytoplasm. Functionally, catalyzes the GTP-dependent ribosomal translocation step during translation elongation. During this step, the ribosome changes from the pre-translocational (PRE) to the post-translocational (POST) state as the newly formed A-site-bound peptidyl-tRNA and P-site-bound deacylated tRNA move to the P and E sites, respectively. Catalyzes the coordinated movement of the two tRNA molecules, the mRNA and conformational changes in the ribosome. The sequence is that of Elongation factor G from Bacillus cytotoxicus (strain DSM 22905 / CIP 110041 / 391-98 / NVH 391-98).